A 400-amino-acid polypeptide reads, in one-letter code: Subtilisin-like protease 7 (400 aa).

A signal peptide spans 1-20; sequence MGFITKAIPLALAAASVING. Positions 21-119 are excised as a propeptide; it reads AEIMETRAGV…IERDARVQIN (99 aa). In terms of domain architecture, Inhibitor I9 spans 36 to 118; the sequence is KYIVVMNDGM…YIERDARVQI (83 aa). Asn-58 carries N-linked (GlcNAc...) asparagine glycosylation. The region spanning 129–400 is the Peptidase S8 domain; sequence SWGLARVGSK…SKLINNGSGM (272 aa). Active-site charge relay system residues include Asp-161 and His-192. Asn-222 and Asn-252 each carry an N-linked (GlcNAc...) asparagine glycan. Ser-346 (charge relay system) is an active-site residue. N-linked (GlcNAc...) asparagine glycosylation occurs at Asn-396.

This sequence belongs to the peptidase S8 family.

Its subcellular location is the secreted. In terms of biological role, secreted subtilisin-like serine protease with keratinolytic activity that contributes to pathogenicity. This chain is Subtilisin-like protease 7 (SUB7), found in Trichophyton verrucosum (Cattle ringworm fungus).